We begin with the raw amino-acid sequence, 504 residues long: Anaerobic nitric oxide reductase transcription regulator NorR (504 aa).

Aspartate 57 carries the 4-aspartylphosphate modification. Residues methionine 187 to valine 416 form the Sigma-54 factor interaction domain. ATP-binding positions include glycine 215–glutamate 222 and alanine 278–glutamate 287. The H-T-H motif DNA-binding region spans tryptophan 479–lysine 498.

It participates in nitrogen metabolism; nitric oxide reduction. Functionally, required for the expression of anaerobic nitric oxide (NO) reductase, acts as a transcriptional activator for at least the norVW operon. Activation also requires sigma-54. The chain is Anaerobic nitric oxide reductase transcription regulator NorR from Escherichia coli O17:K52:H18 (strain UMN026 / ExPEC).